Consider the following 3953-residue polypeptide: Zinc finger protein 469 (3953 aa).

Disordered regions lie at residues 1-274, 313-465, 512-672, 763-784, 869-1383, 1400-1461, 1575-1610, 1703-1864, 1884-1947, 1991-2030, 2070-2700, 2716-2915, 3001-3036, and 3072-3110; these read MPGE…VSFQ, WPEE…MFFN, EWQG…FPFP, GHQR…RVPA, ADEE…HSEL, PKPS…DLPV, LQRS…SQRR, SKTG…GASS, VSNT…TVEG, KTQG…TGPT, LTAA…TLGP, AGET…LSDS, EMPA…PGNT, and GPSF…PAKG. Over residues 187–198 the composition is skewed to polar residues; it reads PPSSFTSTNYTS. 2 stretches are compositionally biased toward pro residues: residues 202–211 and 324–335; these read TPRPPAPGPP and YPLPTQPAPSPL. Residues 603–623 show a composition bias toward low complexity; that stretch reads STCSSLSPMSSSPANPSSEES. Pro residues-rich tracts occupy residues 768–780 and 896–911; these read PGPP…PAAP and KAPP…PQTP. Over residues 944-953 the composition is skewed to basic residues; sequence QQRRGKQLKL. Positions 963 to 975 are enriched in gly residues; that stretch reads AAEGSGSGGGGRA. Basic and acidic residues predominate over residues 981-991; sequence RRNDGLGERPP. Over residues 1005–1017 the composition is skewed to low complexity; that stretch reads RADPAPRVPRAAA. Basic residues-rich tracts occupy residues 1025 to 1042 and 1058 to 1070; these read SRRR…RKAR and KNRR…RRAG. Basic and acidic residues predominate over residues 1082–1093; that stretch reads PGAEDRRLREYD. Acidic residues predominate over residues 1094-1103; sequence FASESEEDEQ. The span at 1120 to 1137 shows a compositional bias: basic and acidic residues; it reads KRKEVELTQGPREDEPQK. Residues 1158-1177 are compositionally biased toward low complexity; sequence PGGSRPGPGRSPQARGPSRS. A compositionally biased stretch (basic and acidic residues) spans 1213–1229; that stretch reads EETRPSLDFPQEAKEPE. Polar residues-rich tracts occupy residues 1278-1290 and 1333-1350; these read PKPS…TAPH and NPSS…SKIS. Positions 1577-1595 are enriched in basic and acidic residues; the sequence is RSKDTRGAPRELAEAESVG. Polar residues-rich tracts occupy residues 1991–2005 and 2014–2024; these read KTQG…QPEN and NHASVNASPKT. The span at 2243–2262 shows a compositional bias: basic and acidic residues; that stretch reads DTPKDSTLRIPEDSRKEKLW. Polar residues predominate over residues 2409–2435; sequence TAPSSTASDFQSDSPQSHRNASHQTPQ. A C2H2-type 1 zinc finger spans residues 2472–2498; the sequence is VTCEVCAASFRSGPGLSRHKARKHRPH. The segment covering 2488–2498 has biased composition (basic residues); the sequence is SRHKARKHRPH. Residues 2506–2521 are compositionally biased toward low complexity; sequence SPAALPAQQPLEPLAQ. Residues 2534 to 2546 show a composition bias toward basic and acidic residues; it reads SGKERPNHSRGDP. Residues 2565–2574 are compositionally biased toward low complexity; it reads PGSPHSQQLH. Basic and acidic residues predominate over residues 2592 to 2631; the sequence is PRPDQAREDELHPKQAEKREGRRWRREPTVDSPSHSEGKS. Residues 2632 to 2642 are compositionally biased toward basic residues; it reads NKKRGKLRGRR. Low complexity predominate over residues 2664-2676; it reads PSPAMASYAASPS. Residues 2777-2787 are compositionally biased toward basic and acidic residues; the sequence is DSSRAHSRSEE. Over residues 2805–2816 the composition is skewed to low complexity; sequence TSSSPADSTTSS. The span at 2869 to 2879 shows a compositional bias: basic residues; it reads LTRKRNPHVYG. Residues 3095–3105 show a composition bias toward low complexity; it reads AAGAGRAQGRG. The segment at 3115–3137 adopts a C2H2-type 2 zinc-finger fold; sequence YKCKVCFQRFRSLGELDLHKLAH. Residues 3232–3322 form a disordered region; it reads TEPAPKHHRG…PDPWAGGEPL (91 aa). Residues 3260-3272 are compositionally biased toward basic and acidic residues; it reads GEAKKDSPGERAK. The span at 3302–3314 shows a compositional bias: pro residues; the sequence is PGPPRTTPSPSPD. C2H2-type zinc fingers lie at residues 3337-3359 and 3365-3388; these read RDCH…LAVH and YLCP…GGAH. The segment at 3418 to 3442 adopts a C2H2-type 5; degenerate zinc-finger fold; that stretch reads FACSSCNYTFAKKEQFDRHMNKHLR. Disordered stretches follow at residues 3448-3501, 3518-3559, and 3576-3925; these read FAFR…PILS, STTK…SPFP, and ERPE…HRTA. Residues 3584-3602 show a composition bias toward low complexity; it reads PGSPGPLLQQALPLGASLP. A compositionally biased stretch (basic and acidic residues) spans 3633-3651; that stretch reads CAPDHFQEDHLLQKEKEVS. Low complexity-rich tracts occupy residues 3728 to 3741 and 3749 to 3759; these read PGPS…PRPG and QPQPASGQLQS. Basic and acidic residues-rich tracts occupy residues 3876–3892 and 3915–3925; these read EQRK…DRLG and EPAEPHTHRTA.

The protein belongs to the krueppel C2H2-type zinc-finger protein family. As to expression, detected in cornea, sclera, skin fibroblasts and striated muscle.

The protein resides in the nucleus. May be involved in transcriptional regulation. This chain is Zinc finger protein 469 (ZNF469), found in Homo sapiens (Human).